Reading from the N-terminus, the 93-residue chain is U12-lycotoxin-Ls1d (93 aa).

The N-terminal stretch at 1–18 is a signal peptide; the sequence is MKFAVILLFSLVVLAVAS. A propeptide spanning residues 19–38 is cleaved from the precursor; that stretch reads ESVEEVRREIDIEDLPEQQR.

Belongs to the neurotoxin 31 family. Contains 5 disulfide bonds. In terms of tissue distribution, expressed by the venom gland.

The protein localises to the secreted. The polypeptide is U12-lycotoxin-Ls1d (Lycosa singoriensis (Wolf spider)).